Here is a 372-residue protein sequence, read N- to C-terminus: Cytochrome b (372 aa).

4 helical membrane-spanning segments follow: residues 25-45 (FGSMLLTCLMMQIMTGFFLAI), 69-90 (WIMQNIHAIGASVFFICIYIHI), 105-125 (WFSGTALLITLMATAFFGYVL), and 170-190 (FFALHFILPFTIASLSSIHII). His75 and His89 together coordinate heme b. Heme b is bound by residues His174 and His188. His193 contacts a ubiquinone. The next 4 helical transmembrane spans lie at 218–238 (YKDMLMTTSMFMLMFMILSFM), 280–300 (LGGTLALLMSVTILITAPFTH), 312–332 (LAQTLFWTLIATFITITWTAT), and 339–358 (FILISQMASVFYFSFFIMNP).

This sequence belongs to the cytochrome b family. The cytochrome bc1 complex contains 3 respiratory subunits (MT-CYB, CYC1 and UQCRFS1), 2 core proteins (UQCRC1 and UQCRC2) and probably 6 low-molecular weight proteins. Requires heme b as cofactor.

The protein localises to the mitochondrion inner membrane. Its function is as follows. Component of the ubiquinol-cytochrome c reductase complex (complex III or cytochrome b-c1 complex) that is part of the mitochondrial respiratory chain. The b-c1 complex mediates electron transfer from ubiquinol to cytochrome c. Contributes to the generation of a proton gradient across the mitochondrial membrane that is then used for ATP synthesis. The chain is Cytochrome b (MT-CYB) from Sinomicrurus japonicus (Coral snake).